We begin with the raw amino-acid sequence, 143 residues long: Transcriptional regulator MraZ (143 aa).

SpoVT-AbrB domains are found at residues 5-47 (EYQH…PLNE) and 76-119 (ATEC…SDER).

This sequence belongs to the MraZ family. In terms of assembly, forms oligomers.

The protein localises to the cytoplasm. Its subcellular location is the nucleoid. The polypeptide is Transcriptional regulator MraZ (Enterococcus faecalis (strain ATCC 700802 / V583)).